Reading from the N-terminus, the 463-residue chain is Cysteine--tRNA ligase (463 aa).

Zn(2+) is bound at residue C33. The 'HIGH' region motif lies at 35-45; that stretch reads PTVYDFAHIGN. C221, H246, and E250 together coordinate Zn(2+). The 'KMSKS' region motif lies at 279–283; that stretch reads KMSKS. Residue K282 participates in ATP binding.

It belongs to the class-I aminoacyl-tRNA synthetase family. Monomer. Requires Zn(2+) as cofactor.

It is found in the cytoplasm. The catalysed reaction is tRNA(Cys) + L-cysteine + ATP = L-cysteinyl-tRNA(Cys) + AMP + diphosphate. The chain is Cysteine--tRNA ligase from Rhizobium johnstonii (strain DSM 114642 / LMG 32736 / 3841) (Rhizobium leguminosarum bv. viciae).